The primary structure comprises 161 residues: Disulfide bond formation protein B (161 aa).

At 1 to 8 the chain is on the cytoplasmic side; that stretch reads MQANSRAY. The helical transmembrane segment at 9–25 threads the bilayer; the sequence is FLLIALVSFGLVGVALY. Over 26-43 the chain is Periplasmic; the sequence is LQFEKGYQPCPLCVMQRF. A disulfide bridge connects residues C35 and C38. The chain crosses the membrane as a helical span at residues 44-58; the sequence is AFIGIGIFSLLAAVA. Topologically, residues 59–63 are cytoplasmic; that stretch reads QNTRS. A helical transmembrane segment spans residues 64–81; sequence LWQGLGMLSGIAGIAVAV. Residues 82 to 136 are Periplasmic-facing; the sequence is YHVSLLLNPKASCGIDPLENWVNALPTAKALPQVFYADGLCTAPLPPVLGLSVPA. A disulfide bond links C94 and C122. The chain crosses the membrane as a helical span at residues 137 to 155; sequence WSLIWLFILTLTLAVGLIR. Over 156-161 the chain is Cytoplasmic; it reads REKNFR.

It belongs to the DsbB family.

It localises to the cell inner membrane. Its function is as follows. Required for disulfide bond formation in some periplasmic proteins. Acts by oxidizing the DsbA protein. This chain is Disulfide bond formation protein B, found in Cupriavidus necator (strain ATCC 17699 / DSM 428 / KCTC 22496 / NCIMB 10442 / H16 / Stanier 337) (Ralstonia eutropha).